Reading from the N-terminus, the 314-residue chain is Polyamine aminopropyltransferase (314 aa).

In terms of domain architecture, PABS spans 13 to 249; sequence WSWFLEWLTP…SMWGFVVASD (237 aa). S-methyl-5'-thioadenosine is bound at residue Gln-42. The spermidine site is built by His-73 and Glu-97. S-methyl-5'-thioadenosine contacts are provided by residues Asp-117 and 149–150; that span reads DA. The active-site Proton acceptor is the Asp-168. Pro-177 contacts S-methyl-5'-thioadenosine.

Belongs to the spermidine/spermine synthase family. Homodimer or homotetramer.

Its subcellular location is the cytoplasm. The enzyme catalyses S-adenosyl 3-(methylsulfanyl)propylamine + putrescine = S-methyl-5'-thioadenosine + spermidine + H(+). Its pathway is amine and polyamine biosynthesis; spermidine biosynthesis; spermidine from putrescine: step 1/1. Functionally, catalyzes the irreversible transfer of a propylamine group from the amino donor S-adenosylmethioninamine (decarboxy-AdoMet) to putrescine (1,4-diaminobutane) to yield spermidine. This chain is Polyamine aminopropyltransferase, found in Aeropyrum pernix (strain ATCC 700893 / DSM 11879 / JCM 9820 / NBRC 100138 / K1).